Reading from the N-terminus, the 267-residue chain is 22 kDa alpha-zein 14 (267 aa).

Positions 1–21 (MATKILSLLALLALFASATNA) are cleaved as a signal peptide.

It belongs to the zein family.

Its function is as follows. Zeins are major seed storage proteins. The polypeptide is 22 kDa alpha-zein 14 (Zea mays (Maize)).